A 95-amino-acid chain; its full sequence is Cell division topological specificity factor (95 aa).

It belongs to the MinE family.

Functionally, prevents the cell division inhibition by proteins MinC and MinD at internal division sites while permitting inhibition at polar sites. This ensures cell division at the proper site by restricting the formation of a division septum at the midpoint of the long axis of the cell. In Trichodesmium erythraeum (strain IMS101), this protein is Cell division topological specificity factor.